The sequence spans 259 residues: DNA-directed RNA polymerase subunit Rpo3 (259 aa).

This sequence belongs to the archaeal Rpo3/eukaryotic RPB3 RNA polymerase subunit family. As to quaternary structure, part of the RNA polymerase complex.

It localises to the cytoplasm. It carries out the reaction RNA(n) + a ribonucleoside 5'-triphosphate = RNA(n+1) + diphosphate. Its function is as follows. DNA-dependent RNA polymerase (RNAP) catalyzes the transcription of DNA into RNA using the four ribonucleoside triphosphates as substrates. This Thermococcus kodakarensis (strain ATCC BAA-918 / JCM 12380 / KOD1) (Pyrococcus kodakaraensis (strain KOD1)) protein is DNA-directed RNA polymerase subunit Rpo3.